The following is a 115-amino-acid chain: MKKKNRIKKNDEFQAVFQKGQSNANRQFVVYKLDKEKQPHFRIGLSVSKKIGNAVVRNRIKRMIRQSIIELKDEIDSGKDFVIIARKPCAEMTYEELKKSLIHVFKRSGMKRIKK.

This sequence belongs to the RnpA family. Consists of a catalytic RNA component (M1 or rnpB) and a protein subunit.

It carries out the reaction Endonucleolytic cleavage of RNA, removing 5'-extranucleotides from tRNA precursor.. Its function is as follows. RNaseP catalyzes the removal of the 5'-leader sequence from pre-tRNA to produce the mature 5'-terminus. It can also cleave other RNA substrates such as 4.5S RNA. The protein component plays an auxiliary but essential role in vivo by binding to the 5'-leader sequence and broadening the substrate specificity of the ribozyme. This is Ribonuclease P protein component from Bacillus mycoides (strain KBAB4) (Bacillus weihenstephanensis).